The sequence spans 259 residues: Tegument protein UL51 homolog (259 aa).

Cysteine 9 carries the S-palmitoyl cysteine; by host lipid modification.

It belongs to the herpesviridae UL51 family. As to quaternary structure, oligomerizes. Interacts with ORF53; this interaction mediates ORF53 incorporation to virions. Post-translationally, phosphorylated. Palmitoylation is necessary for Golgi localization.

The protein resides in the virion tegument. It localises to the host cytoplasm. The protein localises to the host Golgi apparatus. Functionally, plays several roles during the time course of infection, including egress of virus particles from the perinuclear space and secondary envelopment of cytoplasmic capsids that bud into specific trans-Golgi network (TGN)-derived membranes. This chain is Tegument protein UL51 homolog, found in Varicella-zoster virus (strain Dumas) (HHV-3).